The following is a 348-amino-acid chain: Anthranilate phosphoribosyltransferase (348 aa).

Residues G81, 84 to 85, T89, 91 to 94, 109 to 117, and S121 each bind 5-phospho-alpha-D-ribose 1-diphosphate; these read GD, NIST, and KHGNRAMSS. Residue G81 participates in anthranilate binding. S93 is a Mg(2+) binding site. N112 contacts anthranilate. Residue R167 coordinates anthranilate. The Mg(2+) site is built by D226 and E227.

Belongs to the anthranilate phosphoribosyltransferase family. Homodimer. It depends on Mg(2+) as a cofactor.

It catalyses the reaction N-(5-phospho-beta-D-ribosyl)anthranilate + diphosphate = 5-phospho-alpha-D-ribose 1-diphosphate + anthranilate. Its pathway is amino-acid biosynthesis; L-tryptophan biosynthesis; L-tryptophan from chorismate: step 2/5. Catalyzes the transfer of the phosphoribosyl group of 5-phosphorylribose-1-pyrophosphate (PRPP) to anthranilate to yield N-(5'-phosphoribosyl)-anthranilate (PRA). In Thermomicrobium roseum (strain ATCC 27502 / DSM 5159 / P-2), this protein is Anthranilate phosphoribosyltransferase.